The following is a 269-amino-acid chain: Energy-coupling factor transporter ATP-binding protein EcfA1 (269 aa).

Residues 8 to 242 form the ABC transporter domain; sequence IVFKNVSFQY…AEELTTIGLD (235 aa). Position 42-49 (42-49) interacts with ATP; it reads GHNGSGKS.

This sequence belongs to the ABC transporter superfamily. Energy-coupling factor EcfA family. As to quaternary structure, forms a stable energy-coupling factor (ECF) transporter complex composed of 2 membrane-embedded substrate-binding proteins (S component), 2 ATP-binding proteins (A component) and 2 transmembrane proteins (T component).

It localises to the cell membrane. In terms of biological role, ATP-binding (A) component of a common energy-coupling factor (ECF) ABC-transporter complex. Unlike classic ABC transporters this ECF transporter provides the energy necessary to transport a number of different substrates. The chain is Energy-coupling factor transporter ATP-binding protein EcfA1 from Staphylococcus aureus (strain MSSA476).